Consider the following 252-residue polypeptide: Coenzyme F420:L-glutamate ligase (252 aa).

Residues 11-14, 45-46, and Lys-50 contribute to the GTP site; these read MPLV and ET. Asp-115 serves as a coordination point for a divalent metal cation. Asn-118 is a binding site for GTP. 3 residues coordinate a divalent metal cation: Asp-156, Thr-157, and Gln-214. 212–219 is a binding site for GTP; the sequence is MGQADEGV.

This sequence belongs to the CofE family. As to quaternary structure, homodimer. Mg(2+) is required as a cofactor. It depends on Mn(2+) as a cofactor. The cofactor is K(+).

The catalysed reaction is oxidized coenzyme F420-0 + GTP + L-glutamate = oxidized coenzyme F420-1 + GDP + phosphate + H(+). It catalyses the reaction oxidized coenzyme F420-1 + GTP + L-glutamate = oxidized coenzyme F420-2 + GDP + phosphate + H(+). The protein operates within cofactor biosynthesis; coenzyme F420 biosynthesis. In terms of biological role, catalyzes the GTP-dependent successive addition of two or more gamma-linked L-glutamates to the L-lactyl phosphodiester of 7,8-didemethyl-8-hydroxy-5-deazariboflavin (F420-0) to form coenzyme F420-0-glutamyl-glutamate (F420-2) or polyglutamated F420 derivatives. This Methanothermobacter thermautotrophicus (strain ATCC 29096 / DSM 1053 / JCM 10044 / NBRC 100330 / Delta H) (Methanobacterium thermoautotrophicum) protein is Coenzyme F420:L-glutamate ligase.